The following is a 260-amino-acid chain: Uridylate kinase (260 aa).

29-32 (KLSG) serves as a coordination point for ATP. Residues 37 to 42 (GDLGYG) are involved in allosteric activation by GTP. UMP is bound at residue G71. Residues G72 and R76 each coordinate ATP. UMP contacts are provided by residues D91 and 152-159 (SGNPFFTT). ATP contacts are provided by T179, Y185, and D188.

Belongs to the UMP kinase family. As to quaternary structure, homohexamer.

Its subcellular location is the cytoplasm. It carries out the reaction UMP + ATP = UDP + ADP. It participates in pyrimidine metabolism; CTP biosynthesis via de novo pathway; UDP from UMP (UMPK route): step 1/1. Allosterically activated by GTP. Inhibited by UTP. In terms of biological role, catalyzes the reversible phosphorylation of UMP to UDP. This Synechocystis sp. (strain ATCC 27184 / PCC 6803 / Kazusa) protein is Uridylate kinase.